The chain runs to 197 residues: GCN5-related N-acetyltransferase 1, chloroplastic (197 aa).

The N-terminal 37 residues, 1-37 (MFLGGTISTPPASLRLRSTLNPQNAVTQSSSQATFPA), are a transit peptide targeting the chloroplast. The segment covering 23 to 34 (QNAVTQSSSQAT) has biased composition (polar residues). The interval 23-46 (QNAVTQSSSQATFPAAMQRKPPSY) is disordered. In terms of domain architecture, N-acetyltransferase spans 58 to 195 (FLLRRTTEGL…GMVFIRKQRN (138 aa)). Acetyl-CoA is bound by residues 129 to 131 (VVV), 137 to 142 (SCGLGK), 165 to 167 (EPR), and Tyr-172. Catalysis depends on Tyr-172, which acts as the Proton donor.

Belongs to the acetyltransferase family. GNAT subfamily. Oligomer. Autoacetylated. Expressed in green tissues. Accumulates mainly in flowers and young leaves, and, to a lower extent, in stems and mature leaves, but barely in roots.

It localises to the plastid. The protein resides in the chloroplast. It carries out the reaction an N-terminal L-alpha-aminoacyl-[protein] + acetyl-CoA = N-terminal N(alpha)-acetyl-L-alpha-aminoacyl-[protein] + CoA + H(+). The enzyme catalyses L-lysyl-[protein] + acetyl-CoA = N(6)-acetyl-L-lysyl-[protein] + CoA + H(+). The catalysed reaction is 5-methoxytryptamine + acetyl-CoA = melatonin + CoA + H(+). It catalyses the reaction serotonin + acetyl-CoA = N-acetylserotonin + CoA + H(+). Inhibited by 5-methoxytryptamine in vitro. Its function is as follows. Protein acetyltransferase with dual specificity triggering both N-alpha-acetylation (NTA) and epsilon-lysine acetylation (KA), possibly with a low efficiency or toward specific plastid substrates. Involved in melatonin biosynthesis by catalyzing the formation of N-acetylserotonin (NAS) from serotonin and of melatonin (N-acetyl-5-methoxytryptamine) from 5-methoxytryptamine (5-MT). This is GCN5-related N-acetyltransferase 1, chloroplastic from Arabidopsis thaliana (Mouse-ear cress).